A 2603-amino-acid chain; its full sequence is Squalestatin tetraketide synthase (2603 aa).

The region spanning 29–455 (TIPIAIIGMS…GANAHVILES (427 aa)) is the Ketosynthase family 3 (KS3) domain. Active-site for beta-ketoacyl synthase activity residues include Cys-202, His-337, and His-377. Residues 463-512 (IANGSGRSNGTGNGHNGANGTTNGHNGTNGTTNGHFDATQATNGHYGTDE) form a disordered region. Residues 469–479 (RSNGTGNGHNG) are compositionally biased toward gly residues. A compositionally biased stretch (low complexity) spans 480-497 (ANGTTNGHNGTNGTTNGH). Positions 608 to 931 (VFTGQGAQWF…PYISCLLRGQ (324 aa)) are malonyl-CoA:ACP transacylase (MAT) domain. The N-terminal hotdog fold stretch occupies residues 1000–1138 (HDLLGSLIVG…GRITIEFDTS (139 aa)). The region spanning 1000 to 1314 (HDLLGSLIVG…NQSVGQMAPQ (315 aa)) is the PKS/mFAS DH domain. The tract at residues 1000–1314 (HDLLGSLIVG…NQSVGQMAPQ (315 aa)) is dehydratase (DH) domain. The active-site Proton acceptor; for dehydratase activity is the His-1032. The C-terminal hotdog fold stretch occupies residues 1157-1314 (LMRSVDPSNL…NQSVGQMAPQ (158 aa)). Asp-1223 acts as the Proton donor; for dehydratase activity in catalysis. Residues 1465 to 1665 (LYRYYTDAIK…GLDIELRDCD (201 aa)) are methyltransferase (CMet) domain. The enoyl reductase (ER) (ER) domain stretch occupies residues 1892–2205 (GLIDTLQFSK…AGKHMGKIVI (314 aa)). Positions 2228–2406 (ASYLIVGGLG…AVSIDLGMVQ (179 aa)) are ketoreductase (KR) domain. Residues 2516 to 2593 (EAIDVVGRAI…ALATTVATKS (78 aa)) form the Carrier domain. Residue Ser-2553 is modified to O-(pantetheine 4'-phosphoryl)serine.

The protein operates within secondary metabolite biosynthesis. Highly reducing polyketide synthase (HR-PKS); part of the gene cluster that mediates the biosynthesis of squalestatin S1 (SQS1, also known as zaragozic acid A), a lead compound for the treatment of hyper-cholesterolemia by targeting squalene synthase (SS). Pks1 is responsible for the biosynthesis of the tetraketide sidechain of SQS1. The biosynthesis must involve 3 rounds of chain extension. After the first and second rounds methyl-transfer occurs, and in all rounds of extension the ketoreductase and dehydratase are active. The enoyl reductase and C-MeT are not active in the final round of extension. This is Squalestatin tetraketide synthase from Phoma sp. (strain C2932).